We begin with the raw amino-acid sequence, 921 residues long: Ubiquitin carboxyl-terminal hydrolase 11 (921 aa).

Residues 1–16 show a composition bias toward low complexity; sequence MAAVAADPAAAAVPAS. The disordered stretch occupies residues 1–29; it reads MAAVAADPAAAAVPASAEDRETQPEAMPD. The DUSP domain occupies 28–133; that stretch reads PDLDQQWRQI…DQPPIERKVI (106 aa). Residue lysine 194 is modified to N6-acetyllysine. The 633-residue stretch at 257 to 889 folds into the USP domain; the sequence is CGLTNLGNTC…AAYVLFYQRQ (633 aa). Cysteine 266 functions as the Nucleophile in the catalytic mechanism. Positions 592–697 are disordered; it reads TKPTSDDDDG…DRTTSPEEAQ (106 aa). Serine 596 carries the post-translational modification Phosphoserine. The span at 597-624 shows a compositional bias: acidic residues; the sequence is DDDDGDEKGDENEDEDVEDDSSSEEEKE. Polar residues-rich tracts occupy residues 657–666 and 676–697; these read LDNSLHTSQW and FTLQ…EEAQ. Phosphoserine is present on serine 692. The active-site Proton acceptor is histidine 847. The segment at 893 to 921 is disordered; sequence RRQSQTASSETPTSPASSSTPNSDIMDVN. A compositionally biased stretch (low complexity) spans 895–915; that stretch reads QSQTASSETPTSPASSSTPNS. Serine 906 carries the phosphoserine modification.

This sequence belongs to the peptidase C19 family. In terms of assembly, monomer. Associated component of the Polycomb group (PcG) multiprotein PRC1-like complex. Interacts with RANBP9/RANBPM. Interacts with BRCA2. Interacts with CHUK/IKKA. Interacts with NFKBIA. Interacts with SPRY3, RAE1, MYCBP2/PAM, and KCTD6.

It is found in the nucleus. Its subcellular location is the cytoplasm. The protein localises to the chromosome. It carries out the reaction Thiol-dependent hydrolysis of ester, thioester, amide, peptide and isopeptide bonds formed by the C-terminal Gly of ubiquitin (a 76-residue protein attached to proteins as an intracellular targeting signal).. Its function is as follows. Protease that can remove conjugated ubiquitin from target proteins and polyubiquitin chains. Inhibits the degradation of target proteins by the proteasome. Cleaves preferentially 'Lys-6' and 'Lys-63'-linked ubiquitin chains. Has lower activity with 'Lys-11' and 'Lys-33'-linked ubiquitin chains, and extremely low activity with 'Lys-27', 'Lys-29' and 'Lys-48'-linked ubiquitin chains (in vitro). Plays a role in the regulation of pathways leading to NF-kappa-B activation. Plays a role in the regulation of DNA repair after double-stranded DNA breaks. Acts as a chromatin regulator via its association with the Polycomb group (PcG) multiprotein PRC1-like complex; may act by deubiquitinating components of the PRC1-like comple. Promotes cell proliferation by deubiquitinating phosphorylated E2F1x. The protein is Ubiquitin carboxyl-terminal hydrolase 11 of Rattus norvegicus (Rat).